We begin with the raw amino-acid sequence, 156 residues long: ATP synthase subunit b (156 aa).

A helical membrane pass occupies residues 11 to 31 (AIAFVIFVWFCMKYVWPPLMA).

Belongs to the ATPase B chain family. As to quaternary structure, F-type ATPases have 2 components, F(1) - the catalytic core - and F(0) - the membrane proton channel. F(1) has five subunits: alpha(3), beta(3), gamma(1), delta(1), epsilon(1). F(0) has three main subunits: a(1), b(2) and c(10-14). The alpha and beta chains form an alternating ring which encloses part of the gamma chain. F(1) is attached to F(0) by a central stalk formed by the gamma and epsilon chains, while a peripheral stalk is formed by the delta and b chains.

It is found in the cell inner membrane. In terms of biological role, f(1)F(0) ATP synthase produces ATP from ADP in the presence of a proton or sodium gradient. F-type ATPases consist of two structural domains, F(1) containing the extramembraneous catalytic core and F(0) containing the membrane proton channel, linked together by a central stalk and a peripheral stalk. During catalysis, ATP synthesis in the catalytic domain of F(1) is coupled via a rotary mechanism of the central stalk subunits to proton translocation. Component of the F(0) channel, it forms part of the peripheral stalk, linking F(1) to F(0). The sequence is that of ATP synthase subunit b from Klebsiella pneumoniae (strain 342).